Here is a 344-residue protein sequence, read N- to C-terminus: Ribosomal RNA large subunit methyltransferase Cfr (344 aa).

The Proton acceptor role is filled by Glu-90. The 234-residue stretch at Lys-97–Glu-330 folds into the Radical SAM core domain. Residues Cys-104 and Cys-335 are joined by a disulfide bond. Cys-111, Cys-115, and Cys-118 together coordinate [4Fe-4S] cluster. S-adenosyl-L-methionine is bound by residues Gly-157–Glu-158, Ser-188, Ser-211–His-213, and Asn-292. The active-site S-methylcysteine intermediate is Cys-335.

Belongs to the radical SAM superfamily. RlmN family. Cfr subfamily. The cofactor is [4Fe-4S] cluster.

The protein localises to the cytoplasm. It catalyses the reaction adenosine(2503) in 23S rRNA + 2 reduced [2Fe-2S]-[ferredoxin] + 2 S-adenosyl-L-methionine = 8-methyladenosine(2503) in 23S rRNA + 5'-deoxyadenosine + L-methionine + 2 oxidized [2Fe-2S]-[ferredoxin] + S-adenosyl-L-homocysteine. Its function is as follows. Specifically methylates position 8 of adenine 2503 in 23S rRNA. Confers resistance to some classes of antibiotics. This Clostridium botulinum (strain Loch Maree / Type A3) protein is Ribosomal RNA large subunit methyltransferase Cfr.